Here is a 475-residue protein sequence, read N- to C-terminus: Ribulose bisphosphate carboxylase large chain (475 aa).

Residues 1–2 constitute a propeptide that is removed on maturation; the sequence is MS. Position 3 is an N-acetylproline (Pro-3). The residue at position 14 (Lys-14) is an N6,N6,N6-trimethyllysine. Residues Asn-123 and Thr-173 each coordinate substrate. Lys-175 serves as the catalytic Proton acceptor. Lys-177 contacts substrate. Residues Lys-201, Asp-203, and Glu-204 each coordinate Mg(2+). Lys-201 bears the N6-carboxylysine mark. The active-site Proton acceptor is the His-294. 3 residues coordinate substrate: Arg-295, His-327, and Ser-379.

This sequence belongs to the RuBisCO large chain family. Type I subfamily. Heterohexadecamer of 8 large chains and 8 small chains; disulfide-linked. The disulfide link is formed within the large subunit homodimers. Mg(2+) is required as a cofactor. Post-translationally, the disulfide bond which can form in the large chain dimeric partners within the hexadecamer appears to be associated with oxidative stress and protein turnover.

The protein localises to the plastid. Its subcellular location is the chloroplast. The enzyme catalyses 2 (2R)-3-phosphoglycerate + 2 H(+) = D-ribulose 1,5-bisphosphate + CO2 + H2O. The catalysed reaction is D-ribulose 1,5-bisphosphate + O2 = 2-phosphoglycolate + (2R)-3-phosphoglycerate + 2 H(+). Its function is as follows. RuBisCO catalyzes two reactions: the carboxylation of D-ribulose 1,5-bisphosphate, the primary event in carbon dioxide fixation, as well as the oxidative fragmentation of the pentose substrate in the photorespiration process. Both reactions occur simultaneously and in competition at the same active site. The sequence is that of Ribulose bisphosphate carboxylase large chain from Cryptomeria japonica (Japanese cedar).